Consider the following 101-residue polypeptide: Apolipoprotein C-II (101 aa).

Positions 1-22 (MGTRYFLVGFLILLVLGFEVQG) are cleaved as a signal peptide. A lipid binding region spans residues 66–74 (AVDEKIRDI). The lipoprotein lipase cofactor stretch occupies residues 78–101 (STAAVTTYAGIITDQVFSVLSGKD).

The protein belongs to the apolipoprotein C2 family. In terms of processing, proapolipoprotein C-II is synthesized as a sialic acid containing glycoprotein which is subsequently desialylated prior to its proteolytic processing. Proapolipoprotein C-II undergoes proteolytic cleavage of its N-terminal hexapeptide to generate apolipoprotein C-II. In bovine, proapolipoprotein C-II was found to be the minor form whereas apolipoprotein C-II was found to be the major form in plasma.

The protein resides in the secreted. Its function is as follows. Component of chylomicrons, very low-density lipoproteins (VLDL), low-density lipoproteins (LDL), and high-density lipoproteins (HDL) in plasma. Plays an important role in lipoprotein metabolism as an activator of lipoprotein lipase. Both proapolipoprotein C-II and apolipoprotein C-II can activate lipoprotein lipase. This Bos taurus (Bovine) protein is Apolipoprotein C-II (APOC2).